Consider the following 177-residue polypeptide: Large ribosomal subunit protein uL16 (177 aa).

The protein belongs to the universal ribosomal protein uL16 family. Part of the 50S ribosomal subunit. Weakly binds 5S rRNA. Probably binds the A and P site tRNAs.

This is 1 of 5 proteins that mediate the attachment of the 5S rRNA onto the large ribosomal subunit, stabilizing the orientation of adjacent RNA domains. Modeling places the A and P site tRNAs in close proximity to this protein. This is Large ribosomal subunit protein uL16 from Haloarcula marismortui (strain ATCC 43049 / DSM 3752 / JCM 8966 / VKM B-1809) (Halobacterium marismortui).